The primary structure comprises 315 residues: Probable integrase/recombinase aq_aa09 (315 aa).

The Core-binding (CB) domain occupies 1 to 78 (MEHFIDTYLY…EVRLFYEWLQ (78 aa)). Residues 106–313 (SKKKYYSDDE…REKQLEAILE (208 aa)) form the Tyr recombinase domain. Active-site residues include arginine 150, lysine 186, histidine 263, arginine 266, and histidine 289. Tyrosine 299 functions as the O-(3'-phospho-DNA)-tyrosine intermediate in the catalytic mechanism.

This sequence belongs to the 'phage' integrase family.

Functionally, may function as an integrase. The protein is Probable integrase/recombinase aq_aa09 of Aquifex aeolicus (strain VF5).